Consider the following 507-residue polypeptide: Nuclear poly(A) polymerase 3 (507 aa).

ATP is bound by residues tyrosine 79–serine 81, serine 91–aspartate 94, aspartate 147, lysine 208, tyrosine 217, and glycine 226–valine 227. The Mg(2+) site is built by aspartate 92, aspartate 94, and aspartate 147.

The protein belongs to the poly(A) polymerase family. As to quaternary structure, monomer. Forms a complex with cleavage and polyadenylation specificity factor (CPSF) subunits FIPS5 and CPSF30. Mg(2+) serves as cofactor. Requires Mn(2+) as cofactor. As to expression, expressed in leaves (mostly in petioles and tips), cotyledon, roots (tips, vascular tissue of the radicle, and throughout the root tissue excluding the elongation zone), stems, and flowers (restricted to the stigma and the pollen in mature anthers). Active in the primary and secondary root systems.

Its subcellular location is the nucleus. The enzyme catalyses RNA(n) + ATP = RNA(n)-3'-adenine ribonucleotide + diphosphate. Essential protein. Polymerase that creates the 3'-poly(A) tail of mRNA's. Also required for the endoribonucleolytic cleavage reaction at some polyadenylation sites. May acquire specificity through interaction with a cleavage and polyadenylation specificity factor (CPSF) at its C-terminus. The chain is Nuclear poly(A) polymerase 3 from Arabidopsis thaliana (Mouse-ear cress).